The sequence spans 112 residues: Large ribosomal subunit protein uL24 (112 aa).

It belongs to the universal ribosomal protein uL24 family. As to quaternary structure, part of the 50S ribosomal subunit.

In terms of biological role, one of two assembly initiator proteins, it binds directly to the 5'-end of the 23S rRNA, where it nucleates assembly of the 50S subunit. One of the proteins that surrounds the polypeptide exit tunnel on the outside of the subunit. The polypeptide is Large ribosomal subunit protein uL24 (Desulfitobacterium hafniense (strain Y51)).